The primary structure comprises 361 residues: Phosphoserine aminotransferase (361 aa).

An L-glutamate-binding site is contributed by Arg43. The pyridoxal 5'-phosphate site is built by Trp103, Thr153, Asp173, and Gln196. At Lys197 the chain carries N6-(pyridoxal phosphate)lysine. 238 to 239 lines the pyridoxal 5'-phosphate pocket; sequence NT.

This sequence belongs to the class-V pyridoxal-phosphate-dependent aminotransferase family. SerC subfamily. As to quaternary structure, homodimer. Requires pyridoxal 5'-phosphate as cofactor.

It is found in the cytoplasm. The enzyme catalyses O-phospho-L-serine + 2-oxoglutarate = 3-phosphooxypyruvate + L-glutamate. It catalyses the reaction 4-(phosphooxy)-L-threonine + 2-oxoglutarate = (R)-3-hydroxy-2-oxo-4-phosphooxybutanoate + L-glutamate. It participates in amino-acid biosynthesis; L-serine biosynthesis; L-serine from 3-phospho-D-glycerate: step 2/3. It functions in the pathway cofactor biosynthesis; pyridoxine 5'-phosphate biosynthesis; pyridoxine 5'-phosphate from D-erythrose 4-phosphate: step 3/5. Its function is as follows. Catalyzes the reversible conversion of 3-phosphohydroxypyruvate to phosphoserine and of 3-hydroxy-2-oxo-4-phosphonooxybutanoate to phosphohydroxythreonine. This is Phosphoserine aminotransferase from Hahella chejuensis (strain KCTC 2396).